A 334-amino-acid polypeptide reads, in one-letter code: GTPase Obg (334 aa).

The Obg domain maps to 4–162 (FDFIDEVKKY…GWIKLELKLL (159 aa)). The region spanning 163-330 (AEVGLVGFPN…FKDKIWKLLH (168 aa)) is the OBG-type G domain. Residues 169–176 (GFPNAGKS), 194–198 (FTTLV), 216–219 (DMPG), 284–287 (SKLD), and 311–313 (SSV) contribute to the GTP site. Mg(2+) contacts are provided by S176 and T196.

The protein belongs to the TRAFAC class OBG-HflX-like GTPase superfamily. OBG GTPase family. As to quaternary structure, monomer. Requires Mg(2+) as cofactor.

The protein localises to the cytoplasm. Functionally, an essential GTPase which binds GTP, GDP and possibly (p)ppGpp with moderate affinity, with high nucleotide exchange rates and a fairly low GTP hydrolysis rate. Plays a role in control of the cell cycle, stress response, ribosome biogenesis and in those bacteria that undergo differentiation, in morphogenesis control. This chain is GTPase Obg, found in Amoebophilus asiaticus (strain 5a2).